The primary structure comprises 511 residues: Lysine--tRNA ligase (511 aa).

Mg(2+)-binding residues include Glu421 and Glu428.

Belongs to the class-II aminoacyl-tRNA synthetase family. In terms of assembly, homodimer. Mg(2+) is required as a cofactor.

It is found in the cytoplasm. It catalyses the reaction tRNA(Lys) + L-lysine + ATP = L-lysyl-tRNA(Lys) + AMP + diphosphate. This Herminiimonas arsenicoxydans protein is Lysine--tRNA ligase.